Here is an 88-residue protein sequence, read N- to C-terminus: Small ribosomal subunit protein uS19 (88 aa).

It belongs to the universal ribosomal protein uS19 family.

Its function is as follows. Protein S19 forms a complex with S13 that binds strongly to the 16S ribosomal RNA. This Carsonella ruddii (strain PV) protein is Small ribosomal subunit protein uS19.